Reading from the N-terminus, the 200-residue chain is HTH-type transcriptional regulator BetI (200 aa).

Residues 8–68 form the HTH tetR-type domain; the sequence is SIRKQQLIQA…AAMRHIQYQL (61 aa). The H-T-H motif DNA-binding region spans 31–50; it reads SIALIARKAGVSNGIISHYF.

It participates in amine and polyamine biosynthesis; betaine biosynthesis via choline pathway [regulation]. Its function is as follows. Repressor involved in the biosynthesis of the osmoprotectant glycine betaine. It represses transcription of the choline transporter BetT and the genes of BetAB involved in the synthesis of glycine betaine. In Proteus mirabilis (strain HI4320), this protein is HTH-type transcriptional regulator BetI.